The primary structure comprises 383 residues: Gamma-butyrobetaine dioxygenase (383 aa).

Zn(2+) contacts are provided by cysteine 46, cysteine 48, cysteine 51, and histidine 91. Fe cation contacts are provided by histidine 209, aspartate 211, and histidine 350.

The protein belongs to the gamma-BBH/TMLD family. As to quaternary structure, homodimer. The cofactor is Fe(2+). L-ascorbate serves as cofactor.

Its subcellular location is the cytoplasm. It carries out the reaction 4-(trimethylamino)butanoate + 2-oxoglutarate + O2 = carnitine + succinate + CO2. Its pathway is amine and polyamine biosynthesis; carnitine biosynthesis. Functionally, catalyzes the formation of L-carnitine from gamma-butyrobetaine. This chain is Gamma-butyrobetaine dioxygenase, found in Pseudomonas sp. (strain AK-1).